A 276-amino-acid polypeptide reads, in one-letter code: Elongation factor Ts, mitochondrial (276 aa).

The protein belongs to the EF-Ts family.

It localises to the mitochondrion. Associates with the EF-Tu.GDP complex and induces the exchange of GDP to GTP. It remains bound to the aminoacyl-tRNA.EF-Tu.GTP complex up to the GTP hydrolysis stage on the ribosome. In Leishmania major, this protein is Elongation factor Ts, mitochondrial.